The primary structure comprises 365 residues: tRNA/tmRNA (uracil-C(5))-methyltransferase (365 aa).

S-adenosyl-L-methionine is bound by residues Gln189, Tyr217, Asn222, Glu238, and Asp298. Residue Cys323 is the Nucleophile of the active site. The Proton acceptor role is filled by Glu357.

This sequence belongs to the class I-like SAM-binding methyltransferase superfamily. RNA M5U methyltransferase family. TrmA subfamily.

The catalysed reaction is uridine(54) in tRNA + S-adenosyl-L-methionine = 5-methyluridine(54) in tRNA + S-adenosyl-L-homocysteine + H(+). It carries out the reaction uridine(341) in tmRNA + S-adenosyl-L-methionine = 5-methyluridine(341) in tmRNA + S-adenosyl-L-homocysteine + H(+). Its function is as follows. Dual-specificity methyltransferase that catalyzes the formation of 5-methyluridine at position 54 (m5U54) in all tRNAs, and that of position 341 (m5U341) in tmRNA (transfer-mRNA). In Shewanella loihica (strain ATCC BAA-1088 / PV-4), this protein is tRNA/tmRNA (uracil-C(5))-methyltransferase.